Reading from the N-terminus, the 198-residue chain is Holliday junction resolvase RecU (198 aa).

The Mg(2+) site is built by threonine 83, aspartate 85, glutamate 98, and glutamine 117.

This sequence belongs to the RecU family. Requires Mg(2+) as cofactor.

The protein localises to the cytoplasm. The enzyme catalyses Endonucleolytic cleavage at a junction such as a reciprocal single-stranded crossover between two homologous DNA duplexes (Holliday junction).. Its function is as follows. Endonuclease that resolves Holliday junction intermediates in genetic recombination. Cleaves mobile four-strand junctions by introducing symmetrical nicks in paired strands. Promotes annealing of linear ssDNA with homologous dsDNA. Required for DNA repair, homologous recombination and chromosome segregation. This chain is Holliday junction resolvase RecU, found in Streptococcus thermophilus (strain CNRZ 1066).